Reading from the N-terminus, the 85-residue chain is CDC42 small effector protein 2 (85 aa).

S-palmitoyl cysteine attachment occurs at residues Cys-10 and Cys-11. The 14-residue stretch at 29–42 folds into the CRIB domain; the sequence is IGEPTNFVHTAHVG.

This sequence belongs to the CDC42SE/SPEC family.

It is found in the cytoplasm. It localises to the cytoskeleton. The protein resides in the cell membrane. Its function is as follows. Probably involved in the organization of the actin cytoskeleton by acting downstream of CDC42, inducing actin filament assembly. This Danio rerio (Zebrafish) protein is CDC42 small effector protein 2 (cdc42se2).